Reading from the N-terminus, the 398-residue chain is Lipase member N (398 aa).

The signal sequence occupies residues 1–18; sequence MMWLLLTTTCLICGTLNA. One can recognise an AB hydrolase-1 domain in the interval 79–379; that stretch reads PVVYMQHALF…DWNHFDFVWG (301 aa). Residue S173 is the Nucleophile of the active site. C247 and C256 are disulfide-bonded. N272 is a glycosylation site (N-linked (GlcNAc...) asparagine). Active-site charge relay system residues include D344 and H373.

It belongs to the AB hydrolase superfamily. Lipase family. Highly expressed in the epidermis in the granular keratinocytes. Also detected in other tissues, although at much lower levels, including lung and spleen.

Its subcellular location is the secreted. It carries out the reaction a sterol ester + H2O = a sterol + a fatty acid + H(+). The enzyme catalyses a triacylglycerol + H2O = a 1,2-diacylglycerol + a fatty acid + H(+). It catalyses the reaction a triacylglycerol + H2O = a diacylglycerol + a fatty acid + H(+). The catalysed reaction is a cholesterol ester + H2O = cholesterol + a fatty acid + H(+). Its function is as follows. Plays a highly specific role in the last step of keratinocyte differentiation. Contains two distinct domains: the alpha/beta hydrolase fold and the abhydrolase-associated lipase region, also features the consensus sequence of the active site of a genuine lipase. May have an essential function in lipid metabolism of the most differentiated epidermal layers. This chain is Lipase member N (LIPN), found in Homo sapiens (Human).